The sequence spans 341 residues: N-acetyl-gamma-glutamyl-phosphate reductase (341 aa).

Cysteine 147 is a catalytic residue.

The protein belongs to the NAGSA dehydrogenase family. Type 1 subfamily.

The protein resides in the cytoplasm. It carries out the reaction N-acetyl-L-glutamate 5-semialdehyde + phosphate + NADP(+) = N-acetyl-L-glutamyl 5-phosphate + NADPH + H(+). The protein operates within amino-acid biosynthesis; L-arginine biosynthesis; N(2)-acetyl-L-ornithine from L-glutamate: step 3/4. Its function is as follows. Catalyzes the NADPH-dependent reduction of N-acetyl-5-glutamyl phosphate to yield N-acetyl-L-glutamate 5-semialdehyde. This Staphylococcus epidermidis (strain ATCC 35984 / DSM 28319 / BCRC 17069 / CCUG 31568 / BM 3577 / RP62A) protein is N-acetyl-gamma-glutamyl-phosphate reductase.